The sequence spans 353 residues: Melatonin receptor type 1A (353 aa).

Topologically, residues Met1–Thr32 are extracellular. N-linked (GlcNAc...) asparagine glycans are attached at residues Asn4 and Asn10. The helical transmembrane segment at Leu33–Leu53 threads the bilayer. Topologically, residues Ser54–Asn66 are cytoplasmic. Residues Ile67–Val87 form a helical membrane-spanning segment. At Leu88–Val105 the chain is on the extracellular side. Cysteines 103 and 180 form a disulfide. The chain crosses the membrane as a helical span at residues Ser106–Met126. Over Asn127–Lys145 the chain is Cytoplasmic. A helical transmembrane segment spans residues Asn146–Leu166. Residues Gln167–Tyr190 are Extracellular-facing. A helical membrane pass occupies residues Thr191–Leu211. Topologically, residues Arg212–Met243 are cytoplasmic. A helical membrane pass occupies residues Phe244 to Val264. The Extracellular portion of the chain corresponds to Ala265–Glu277. A helical membrane pass occupies residues Trp278–Tyr298. Residues Gly299 to Val353 are Cytoplasmic-facing.

This sequence belongs to the G-protein coupled receptor 1 family.

Its subcellular location is the cell membrane. Functionally, high affinity receptor for melatonin. Likely to mediate the reproductive and circadian actions of melatonin. The activity of this receptor is mediated by pertussis toxin sensitive G proteins that inhibit adenylate cyclase activity. Possibly involved in sleep induction, by melatonin activation of the potassium channel KCNMA1/BK and the dissociation of G-beta and G-gamma subunits, thereby decreasing synaptic transmission. The polypeptide is Melatonin receptor type 1A (Mtnr1a) (Mus musculus (Mouse)).